The following is a 63-amino-acid chain: Large ribosomal subunit protein bL35 (63 aa).

Basic residues-rich tracts occupy residues 1 to 25 and 32 to 47; these read MPKMKSKSSAAKRFKKTANGFKHRQ and LTKKSTKRKRHLRPKK. The disordered stretch occupies residues 1-55; the sequence is MPKMKSKSSAAKRFKKTANGFKHRQSFTSHILTKKSTKRKRHLRPKKQVNPSDVP.

This sequence belongs to the bacterial ribosomal protein bL35 family.

This chain is Large ribosomal subunit protein bL35, found in Hahella chejuensis (strain KCTC 2396).